Here is a 354-residue protein sequence, read N- to C-terminus: Magnesium-protoporphyrin IX monomethyl ester [oxidative] cyclase (354 aa).

The protein belongs to the AcsF family. It depends on Fe cation as a cofactor.

It localises to the plastid. The protein localises to the chloroplast. It catalyses the reaction Mg-protoporphyrin IX 13-monomethyl ester + 3 NADPH + 3 O2 + 2 H(+) = 3,8-divinyl protochlorophyllide a + 3 NADP(+) + 5 H2O. The protein operates within porphyrin-containing compound metabolism; chlorophyll biosynthesis (light-independent). In terms of biological role, catalyzes the formation of the isocyclic ring in chlorophyll biosynthesis. Mediates the cyclase reaction, which results in the formation of divinylprotochlorophyllide (Pchlide) characteristic of all chlorophylls from magnesium-protoporphyrin IX 13-monomethyl ester (MgPMME). The protein is Magnesium-protoporphyrin IX monomethyl ester [oxidative] cyclase of Cyanidium caldarium (Red alga).